The primary structure comprises 230 residues: Cytidylate kinase (230 aa).

ATP is bound at residue 12-20; that stretch reads GPSGAGKGT.

This sequence belongs to the cytidylate kinase family. Type 1 subfamily.

Its subcellular location is the cytoplasm. The enzyme catalyses CMP + ATP = CDP + ADP. It catalyses the reaction dCMP + ATP = dCDP + ADP. The chain is Cytidylate kinase from Aeromonas hydrophila subsp. hydrophila (strain ATCC 7966 / DSM 30187 / BCRC 13018 / CCUG 14551 / JCM 1027 / KCTC 2358 / NCIMB 9240 / NCTC 8049).